The following is a 502-amino-acid chain: UPF0371 protein CLL_A2797 (502 aa).

The protein belongs to the UPF0371 family.

This is UPF0371 protein CLL_A2797 from Clostridium botulinum (strain Eklund 17B / Type B).